The primary structure comprises 416 residues: Enterobactin exporter EntS (416 aa).

At 1–21 (MNKQSWLLNLSLLKTHPAFRA) the chain is on the cytoplasmic side. A helical membrane pass occupies residues 22–42 (VFLARFISIVSLGLLGVAVPV). Over 43–55 (QIQMMTHSTWLVG) the chain is Periplasmic. Residues 56 to 76 (LSVTLTGGAMFVGLMVGGVLA) traverse the membrane as a helical segment. At 77 to 83 (DRYERKK) the chain is on the cytoplasmic side. The helical transmembrane segment at 84–104 (VILLARGTCGIGFIGLCLNAL) threads the bilayer. Residues 105–109 (LPEPS) lie on the Periplasmic side of the membrane. Residues 110–130 (LLAIYLLGLWDGFFASLGVTA) traverse the membrane as a helical segment. Topologically, residues 131–156 (LLAATPALVGRENLMQAGAITMLTVR) are cytoplasmic. Residues 157–177 (LGSVISPMIGGLLLATGGVAW) form a helical membrane-spanning segment. A topological domain (periplasmic) is located at residue Asn-178. A helical membrane pass occupies residues 179–199 (YGLAAAGTFITLLPLLSLPAL). At 200 to 218 (PPPPQPREHPLKSLLAGFR) the chain is on the cytoplasmic side. A helical membrane pass occupies residues 219–239 (FLLASPLVGGIALLGGLLTMA). The Periplasmic portion of the chain corresponds to 240 to 256 (SAVRVLYPALADNWQMS). Residues 257-277 (AAEIGFLYAAIPLGAAIGALT) form a helical membrane-spanning segment. Residues 278–287 (SGKLAHSARP) are Cytoplasmic-facing. A helical transmembrane segment spans residues 288-307 (GLLMLLSTLGSFLAIGLFGL). The Periplasmic portion of the chain corresponds to 308 to 313 (MPMWIL). The chain crosses the membrane as a helical span at residues 314 to 336 (GVVCLALFGWLSAVSSLLQYTML). Residues 337–356 (QTQTPEAMLGRINGLWTAQN) are Cytoplasmic-facing. Residues 357 to 377 (VTGDAIGAALLGGLGAMMTPV) form a helical membrane-spanning segment. Position 378 (Ala-378) is a topological domain, periplasmic. Residues 379-399 (SASASGFGLLIIGVLLLLVLV) traverse the membrane as a helical segment. At 400 to 416 (ELRRFRQTPPQVTASDS) the chain is on the cytoplasmic side.

This sequence belongs to the major facilitator superfamily. EntS (TC 2.A.1.38) family.

It localises to the cell inner membrane. Functionally, component of an export pathway for enterobactin. The sequence is that of Enterobactin exporter EntS from Shigella boydii serotype 4 (strain Sb227).